The sequence spans 312 residues: Small ribosomal subunit biogenesis GTPase RsgA (312 aa).

Residues 86–245 (QSFLKRPAVA…LADTPGFNRP (160 aa)) enclose the CP-type G domain. Residues 135–138 (TKID) and 187–195 (GPSGVGKTS) contribute to the GTP site. Residues cysteine 270, cysteine 275, histidine 277, and cysteine 283 each contribute to the Zn(2+) site.

Belongs to the TRAFAC class YlqF/YawG GTPase family. RsgA subfamily. As to quaternary structure, monomer. Associates with 30S ribosomal subunit, binds 16S rRNA. The cofactor is Zn(2+).

It localises to the cytoplasm. In terms of biological role, one of several proteins that assist in the late maturation steps of the functional core of the 30S ribosomal subunit. Helps release RbfA from mature subunits. May play a role in the assembly of ribosomal proteins into the subunit. Circularly permuted GTPase that catalyzes slow GTP hydrolysis, GTPase activity is stimulated by the 30S ribosomal subunit. The polypeptide is Small ribosomal subunit biogenesis GTPase RsgA (Prochlorococcus marinus (strain NATL2A)).